A 246-amino-acid chain; its full sequence is Mast cell protease 4 (246 aa).

A signal peptide spans 1 to 18 (MQALLFLMALLLPSGAGA). Residues 19 to 20 (EE) constitute a propeptide, activation peptide. Residues 21-244 (IIGGVESRPH…YVPWINRVIK (224 aa)) enclose the Peptidase S1 domain. A disulfide bond links C50 and C66. Catalysis depends on charge relay system residues H65 and D109. 2 disulfides stabilise this stretch: C143/C208 and C174/C187. The active-site Charge relay system is S202.

The protein belongs to the peptidase S1 family. Granzyme subfamily. Monomer. Interacts with iripin-2, a serine protease inhibitor from Ixodes ricinus saliva. In terms of tissue distribution, submucosal mast cells. In femoral muscle, detected in myocytes but not in mast cells.

Its activity is regulated as follows. Completely inhibited by serine protease inhibitors such as chymostatin, diisopropylfluorophosphate and phenylmethylsulfonyl fluoride, but not by p-tosyl-L-phenylalanine chloromethyl ketone, p-tosyl-L-lysine chloromethyl ketone, pepstatin, E-64, EDTA or o-phenanthroline. Also inhibited by lima bean trypsin inhibitor, soy bean trypsin inhibitor and human plasma alpha1-antichymotrypsin. Has chymotrypsin-like activity. Hydrolyzes the amide bonds of synthetic substrates having Tyr and Phe residues at the P1 position. Preferentially hydrolyzes the 'Tyr-4-|-Ile-5' bond of angiotensin I and the 'Phe-20-|-Ala-21' bond of amyloid beta-protein, and is less active towards the 'Phe-8-|-His-9' bond of angiotensin I and the 'Phe-4-|-Ala-5' and 'Tyr-10-|-Glu-11' bonds of amyloid beta-protein. Involved in thrombin regulation and fibronectin processing. The sequence is that of Mast cell protease 4 (Mcpt4) from Mus musculus (Mouse).